Reading from the N-terminus, the 456-residue chain is Trigger factor (456 aa).

The PPIase FKBP-type domain occupies 166–245; it reads GDYANIDLNA…VNSVKAEELP (80 aa).

Belongs to the FKBP-type PPIase family. Tig subfamily.

Its subcellular location is the cytoplasm. It carries out the reaction [protein]-peptidylproline (omega=180) = [protein]-peptidylproline (omega=0). Involved in protein export. Acts as a chaperone by maintaining the newly synthesized protein in an open conformation. Functions as a peptidyl-prolyl cis-trans isomerase. This chain is Trigger factor, found in Bifidobacterium adolescentis (strain ATCC 15703 / DSM 20083 / NCTC 11814 / E194a).